The chain runs to 266 residues: Ribosomal RNA small subunit methyltransferase A (266 aa).

The S-adenosyl-L-methionine site is built by Asn-13, Leu-15, Gly-40, Glu-61, Asp-86, and Asn-110.

This sequence belongs to the class I-like SAM-binding methyltransferase superfamily. rRNA adenine N(6)-methyltransferase family. RsmA subfamily.

It is found in the cytoplasm. It catalyses the reaction adenosine(1518)/adenosine(1519) in 16S rRNA + 4 S-adenosyl-L-methionine = N(6)-dimethyladenosine(1518)/N(6)-dimethyladenosine(1519) in 16S rRNA + 4 S-adenosyl-L-homocysteine + 4 H(+). Specifically dimethylates two adjacent adenosines (A1518 and A1519) in the loop of a conserved hairpin near the 3'-end of 16S rRNA in the 30S particle. May play a critical role in biogenesis of 30S subunits. This Hydrogenovibrio crunogenus (strain DSM 25203 / XCL-2) (Thiomicrospira crunogena) protein is Ribosomal RNA small subunit methyltransferase A.